The primary structure comprises 1390 residues: Hepatocyte growth factor receptor (1390 aa).

The signal sequence occupies residues 1–24 (MKTPAVLAPGILVLLFTLVQRSNG). Over 25–932 (ECKEALAKSK…VIVQPDQNFT (908 aa)) the chain is Extracellular. Positions 27–515 (KEALAKSKMN…TGKKITKIPL (489 aa)) constitute a Sema domain. An N-linked (GlcNAc...) asparagine glycan is attached at Asn-45. 4 disulfides stabilise this stretch: Cys-95–Cys-101, Cys-98–Cys-160, Cys-133–Cys-141, and Cys-172–Cys-175. An N-linked (GlcNAc...) asparagine glycan is attached at Asn-106. The N-linked (GlcNAc...) asparagine glycan is linked to Asn-149. Asn-202 carries N-linked (GlcNAc...) asparagine glycosylation. Disulfide bonds link Cys-298-Cys-363 and Cys-385-Cys-397. N-linked (GlcNAc...) asparagine glycosylation is found at Asn-399 and Asn-405. Disulfide bonds link Cys-520-Cys-538, Cys-526-Cys-561, Cys-529-Cys-545, and Cys-541-Cys-551. IPT/TIG domains lie at 563–655 (PAIY…FSYV), 657–739 (PVIT…FSYR), and 742–836 (PIVY…LIYV). An O-linked (Man) threonine glycan is attached at Thr-582. N-linked (GlcNAc...) asparagine glycans are attached at residues Asn-607 and Asn-635. Thr-676 and Thr-761 each carry an O-linked (Man) threonine glycan. 3 N-linked (GlcNAc...) asparagine glycosylation sites follow: Asn-785, Asn-879, and Asn-930. Residues 933-955 (GLIAGVVSISVALLLLLGFFLWL) form a helical membrane-spanning segment. Topologically, residues 956–1390 (KKRKQIKDLG…TRPASFWETS (435 aa)) are cytoplasmic. Ser-966 is modified (phosphoserine). The residue at position 977 (Thr-977) is a Phosphothreonine. Ser-990, Ser-997, and Ser-1000 each carry phosphoserine. The residue at position 1003 (Tyr-1003) is a Phosphotyrosine. Positions 1078–1345 (VHFNEVIGRG…RISAIFSTFI (268 aa)) constitute a Protein kinase domain. Residues 1084–1092 (IGRGHFGCV) and Lys-1110 each bind ATP. Asp-1204 functions as the Proton acceptor in the catalytic mechanism. Residues 1212–1381 (LDEKFTVKVA…EDNADNEVDT (170 aa)) form an interaction with RANBP9 region. The residue at position 1230 (Tyr-1230) is a Phosphotyrosine. 2 positions are modified to phosphotyrosine; by autocatalysis: Tyr-1234 and Tyr-1235. Thr-1289 bears the Phosphothreonine mark. Positions 1320 to 1359 (WHPKAEMRPSFSELVSRISAIFSTFIGEHYVHVNATYVNV) are interaction with MUC20. 2 positions are modified to phosphotyrosine; by autocatalysis: Tyr-1349 and Tyr-1356. Phosphotyrosine is present on Tyr-1365.

This sequence belongs to the protein kinase superfamily. Tyr protein kinase family. Heterodimer made of an alpha chain (50 kDa) and a beta chain (145 kDa) which are disulfide linked. Binds PLXNB1. Interacts when phosphorylated with downstream effectors including STAT3, PIK3R1, SRC, PCLG1, GRB2 and GAB1. Interacts with SPSB1, SPSB2 and SPSB4. Interacts with INPP5D/SHIP1. When phosphorylated at Tyr-1356, interacts with INPPL1/SHIP2. Interacts with RANBP9 and RANBP10, as well as SPSB1, SPSB2, SPSB3 and SPSB4. SPSB1 binding occurs in the presence and in the absence of HGF, however HGF treatment has a positive effect on this interaction. Interacts with MUC20; prevents interaction with GRB2 and suppresses hepatocyte growth factor-induced cell proliferation. Interacts with GRB10. Interacts with PTPN1 and PTPN2. Interacts with HSP90AA1 and HSP90AB1; the interaction suppresses MET kinase activity. Interacts with tensin TNS3. Interacts (when phosphorylated) with tensin TNS4 (via SH2 domain); the interaction increases MET protein stability by inhibiting MET endocytosis and subsequent lysosomal degradation. In terms of processing, autophosphorylated in response to ligand binding on Tyr-1234 and Tyr-1235 in the kinase domain leading to further phosphorylation of Tyr-1349 and Tyr-1356 in the C-terminal multifunctional docking site. Dephosphorylated by PTPRJ at Tyr-1349 and Tyr-1365. Dephosphorylated by PTPN1 and PTPN2. Post-translationally, ubiquitinated. Ubiquitination by CBL regulates the receptor stability and activity through proteasomal degradation. O-mannosylation of IPT/TIG domains by TMEM260 is required for protein maturation. O-mannosylated residues are composed of single mannose glycans that are not elongated or modified.

It is found in the membrane. The catalysed reaction is L-tyrosyl-[protein] + ATP = O-phospho-L-tyrosyl-[protein] + ADP + H(+). Its activity is regulated as follows. In its inactive state, the C-terminal tail interacts with the catalytic domain and inhibits the kinase activity. Upon ligand binding, the C-terminal tail is displaced and becomes phosphorylated, thus increasing the kinase activity. Receptor tyrosine kinase that transduces signals from the extracellular matrix into the cytoplasm by binding to hepatocyte growth factor/HGF ligand. Regulates many physiological processes including proliferation, scattering, morphogenesis and survival. Ligand binding at the cell surface induces autophosphorylation of MET on its intracellular domain that provides docking sites for downstream signaling molecules. Following activation by ligand, interacts with the PI3-kinase subunit PIK3R1, PLCG1, SRC, GRB2, STAT3 or the adapter GAB1. Recruitment of these downstream effectors by MET leads to the activation of several signaling cascades including the RAS-ERK, PI3 kinase-AKT, or PLCgamma-PKC. The RAS-ERK activation is associated with the morphogenetic effects while PI3K/AKT coordinates prosurvival effects. During embryonic development, MET signaling plays a role in gastrulation, development and migration of muscles and neuronal precursors, angiogenesis and kidney formation. In adults, participates in wound healing as well as organ regeneration and tissue remodeling. Also promotes differentiation and proliferation of hematopoietic cells. The sequence is that of Hepatocyte growth factor receptor (MET) from Nomascus leucogenys (Northern white-cheeked gibbon).